The primary structure comprises 207 residues: Outer-membrane lipoprotein carrier protein (207 aa).

A signal peptide spans 1 to 21 (MRLIRMLLLPVLAVTTLSAHA).

This sequence belongs to the LolA family. Monomer.

It is found in the periplasm. Its function is as follows. Participates in the translocation of lipoproteins from the inner membrane to the outer membrane. Only forms a complex with a lipoprotein if the residue after the N-terminal Cys is not an aspartate (The Asp acts as a targeting signal to indicate that the lipoprotein should stay in the inner membrane). The polypeptide is Outer-membrane lipoprotein carrier protein (Pseudomonas fluorescens (strain ATCC BAA-477 / NRRL B-23932 / Pf-5)).